We begin with the raw amino-acid sequence, 267 residues long: Chorismate mutase (267 aa).

The Chorismate mutase domain occupies 7–262 (LSDASKALDL…EVEYLMQRLK (256 aa)). 6 residues coordinate L-tyrosine: Arg77, Arg78, Asn145, Gly147, Ser148, and Thr151. Asn145, Gly147, and Ser148 together coordinate L-tryptophan.

In terms of assembly, homodimer.

The protein localises to the cytoplasm. It catalyses the reaction chorismate = prephenate. It functions in the pathway metabolic intermediate biosynthesis; prephenate biosynthesis; prephenate from chorismate: step 1/1. Each dimer has two allosteric binding sites that can bind the regulatory effectors tryptophan or tyrosine. Can bind either one tryptophan or one tyrosine, two tryptophan or two tyrosine or one tryptophan and one tyrosine, which differentially affect the catalytic activity. Activated by tryptophan and subject to feedback inhibition by tyrosine. In the presence of both tryptophan and tyrosine, the enzyme is in the activated state. In terms of biological role, catalyzes the Claisen rearrangement of chorismate to prephenate. Acts at the first branch point in the aromatic amino acid pathway where it steers biosynthesis towards phenylalanine and tyrosine, and away from tryptophan. This is Chorismate mutase from Emericella nidulans (strain FGSC A4 / ATCC 38163 / CBS 112.46 / NRRL 194 / M139) (Aspergillus nidulans).